Consider the following 934-residue polypeptide: Isoleucine--tRNA ligase (934 aa).

The 'HIGH' region signature appears at 58–68 (PYANGEIHIGH). Glu559 is an L-isoleucyl-5'-AMP binding site. Residues 600–604 (KMSKS) carry the 'KMSKS' region motif. Lys603 is a binding site for ATP. Cys897, Cys900, Cys917, and Cys920 together coordinate Zn(2+).

This sequence belongs to the class-I aminoacyl-tRNA synthetase family. IleS type 1 subfamily. Monomer. The cofactor is Zn(2+).

The protein localises to the cytoplasm. The catalysed reaction is tRNA(Ile) + L-isoleucine + ATP = L-isoleucyl-tRNA(Ile) + AMP + diphosphate. In terms of biological role, catalyzes the attachment of isoleucine to tRNA(Ile). As IleRS can inadvertently accommodate and process structurally similar amino acids such as valine, to avoid such errors it has two additional distinct tRNA(Ile)-dependent editing activities. One activity is designated as 'pretransfer' editing and involves the hydrolysis of activated Val-AMP. The other activity is designated 'posttransfer' editing and involves deacylation of mischarged Val-tRNA(Ile). The chain is Isoleucine--tRNA ligase from Teredinibacter turnerae (strain ATCC 39867 / T7901).